The chain runs to 215 residues: C-type lectin domain family 4 member D (215 aa).

The Cytoplasmic segment spans residues 1-17 (MGLEKPQSKLEGGMHPQ). Residues 18 to 38 (LIPSVIAVVFILLLSVCFIAS) form a helical; Signal-anchor for type II membrane protein membrane-spanning segment. The Extracellular portion of the chain corresponds to 39–215 (CLVTHHNFSR…ICKIPGTTLN (177 aa)). Residue Asn-45 is glycosylated (N-linked (GlcNAc...) asparagine). A disulfide bridge connects residues Cys-84 and Cys-95. Positions 91 to 208 (FQSNCYFPLT…CNFEASRICK (118 aa)) constitute a C-type lectin domain. N-linked (GlcNAc...) asparagine glycosylation is found at Asn-102 and Asn-111. Cystine bridges form between Cys-112–Cys-207 and Cys-182–Cys-199. The Ca(2+) site is built by Glu-173, Asp-175, Asn-195, and Asp-196.

In terms of assembly, heterodimer with CLEC4E; disulfide-linked. CLEC4E acts as a bridge for interaction between CLEC4D and FCER1G to form a functional complex. Heterodimer with CLEC6A; this heterodimer forms a pattern recognition receptor (PRR) against fungal infection. As to expression, expressed weakly in peripheral blood leukocytes, bone marrow and spleen. Expression is confined mostly in monocytes and macrophage and seems to be up-regulated by IL-6, IL-10, TNF-alpha and IFN-gamma.

It localises to the cell membrane. Functionally, calcium-dependent lectin that acts as a pattern recognition receptor (PRR) of the innate immune system: recognizes damage-associated molecular patterns (DAMPs) of pathogen-associated molecular patterns (PAMPs) of bacteria and fungi. The PAMPs include alpha-mannans on C.albicans hypheas and mycobacterial trehalose 6,6'-dimycolate (TDM). Interacts with signaling adapter Fc receptor gamma chain/FCER1G, likely via CLEC4E, to form a functional complex in myeloid cells. Binding of mycobacterial TDM or C.albicans alpha-mannans to this receptor complex leads to phosphorylation of the immunoreceptor tyrosine-based activation motif (ITAM) of FCER1G, triggering activation of SYK, CARD9 and NF-kappa-B, consequently driving maturation of antigen-presenting cells and shaping antigen-specific priming of T-cells toward effector T-helper 1 and T-helper 17 cell subtypes. The heterodimer formed with CLEC6A is active against fungal infection. Functions as an endocytic receptor. May be involved in antigen uptake at the site of infection, either for clearance of the antigen, or for processing and further presentation to T-cells. This is C-type lectin domain family 4 member D from Homo sapiens (Human).